The primary structure comprises 1784 residues: Histone acetyltransferase KAT6B (1784 aa).

Residues 1–77 form the SAMD1-like winged helix (WH) domain; the sequence is MVKLANPLYT…LASYKDPDNP (77 aa). Positions 72 to 98 are disordered; the sequence is KDPDNPGRFSSVKPGTFPKSTKESRGS. Residues 103-176 enclose the H15 domain; that stretch reads RNVDWNKLLR…KDGPQYRVNY (74 aa). 2 consecutive PHD-type zinc fingers follow at residues 213 to 272 and 269 to 320; these read IPIC…CKTC and CKTC…CRPK. Serine 355 bears the Phosphoserine mark. Residues 361 to 425 form a negatively regulates HAT activity region; the sequence is GSMNAFTGRG…ECESGVEDCG (65 aa). Lysine 381 is covalently cross-linked (Glycyl lysine isopeptide (Lys-Gly) (interchain with G-Cter in SUMO2)). The 275-residue stretch at 423–697 folds into the MYST-type HAT domain; sequence DCGRYPSVIE…LDPDSLRWTP (275 aa). Positions 426 to 716 are catalytic; the sequence is RYPSVIEFGK…EEEREAEKEA (291 aa). The C2HC MYST-type zinc finger occupies 456–481; that stretch reads LYLCEFCLKYMKSKNILLRHSKKCGW. Residues 460 to 716 are interaction with BRPF1; it reads EFCLKYMKSK…EEEREAEKEA (257 aa). Lysine 523 is modified (N6-acetyllysine; by autocatalysis). Acetyl-CoA is bound by residues 564–568 and 573–579; these read SCIMI and QRQGFGR. The Proton donor/acceptor role is filled by glutamate 599. Serine 603 provides a ligand contact to acetyl-CoA. Disordered stretches follow at residues 730 to 884, 904 to 1163, 1195 to 1273, and 1291 to 1330; these read EQEV…RPMP, RKAF…FKEV, SCNS…FQDC, and QSPQ…SPSV. A compositionally biased stretch (polar residues) spans 733–751; sequence VLSTRANSRQSPAKVQSKN. N6-acetyllysine is present on residues lysine 746, lysine 750, and lysine 752. Residue serine 756 is modified to Phosphoserine. Positions 777–819 are enriched in acidic residues; that stretch reads SEEEEEEEEDEEEEDEEEEEEEEEDEEEEEEEEEEEEEEEEEN. The segment covering 820–831 has biased composition (polar residues); it reads IQSSPPRLTKPQ. Basic residues predominate over residues 835–854; sequence IKRKRPFVLKKKRGRKRRRI. A compositionally biased stretch (low complexity) spans 856-869; the sequence is SSVTTETISETTEV. Residues 904 to 914 are compositionally biased toward basic residues; the sequence is RKAFQHQPGKK. Composition is skewed to basic and acidic residues over residues 938 to 957 and 1055 to 1064; these read MNDD…EPLK and EKPEDDLIKP. The segment covering 1065 to 1087 has biased composition (acidic residues); it reads EEEEEEEEEEEEEEGEEEEEEGG. Composition is skewed to basic and acidic residues over residues 1088 to 1101 and 1107 to 1118; these read NVEK…SQEK and SPEKEDSARLDD. The segment covering 1119–1128 has biased composition (acidic residues); the sequence is HEEEEEEDEE. Residues 1144 to 1163 are compositionally biased toward basic and acidic residues; that stretch reads HMESAEVEKEELPRESFKEV. The span at 1209–1218 shows a compositional bias: acidic residues; it reads AVPESDEEPP. Basic and acidic residues predominate over residues 1224-1240; the sequence is QKQDQKNSKEVDTEFKE. 2 stretches are compositionally biased toward polar residues: residues 1251–1263 and 1291–1302; these read ETVQ…TQES and QSPQIATTLDDC. The segment at 1271 to 1784 is interaction with RUNX1 and RUNX2; that stretch reads QDCAETQEAC…QSLNGSYMRR (514 aa). Over residues 1305 to 1322 the composition is skewed to low complexity; sequence SDHSSPVSSVHSHPGQSV.

The protein belongs to the MYST (SAS/MOZ) family. As to quaternary structure, component of the MOZ/MORF complex composed at least of ING5, KAT6A, KAT6B, MEAF6 and one of BRPF1, BRD1/BRPF2 and BRPF3. Interacts with RUNX1 and RUNX2. Autoacetylation at Lys-523 is required for proper function.

The protein localises to the nucleus. It catalyses the reaction L-lysyl-[protein] + acetyl-CoA = N(6)-acetyl-L-lysyl-[protein] + CoA + H(+). Histone acetyltransferase which may be involved in both positive and negative regulation of transcription. Required for RUNX2-dependent transcriptional activation. May be involved in cerebral cortex development. Component of the MOZ/MORF complex which has a histone H3 acetyltransferase activity. This is Histone acetyltransferase KAT6B (KAT6B) from Macaca fascicularis (Crab-eating macaque).